A 419-amino-acid polypeptide reads, in one-letter code: Sulfate adenylyltransferase (419 aa).

Belongs to the sulfate adenylyltransferase family.

It carries out the reaction sulfate + ATP + H(+) = adenosine 5'-phosphosulfate + diphosphate. It functions in the pathway sulfur metabolism; hydrogen sulfide biosynthesis; sulfite from sulfate: step 1/3. The protein is Sulfate adenylyltransferase of Psychrobacter sp. (strain PRwf-1).